A 212-amino-acid polypeptide reads, in one-letter code: ATP-dependent Clp protease proteolytic subunit (212 aa).

Ser-112 serves as the catalytic Nucleophile. Residue His-137 is part of the active site.

It belongs to the peptidase S14 family. In terms of assembly, fourteen ClpP subunits assemble into 2 heptameric rings which stack back to back to give a disk-like structure with a central cavity, resembling the structure of eukaryotic proteasomes.

The protein localises to the cytoplasm. It catalyses the reaction Hydrolysis of proteins to small peptides in the presence of ATP and magnesium. alpha-casein is the usual test substrate. In the absence of ATP, only oligopeptides shorter than five residues are hydrolyzed (such as succinyl-Leu-Tyr-|-NHMec, and Leu-Tyr-Leu-|-Tyr-Trp, in which cleavage of the -Tyr-|-Leu- and -Tyr-|-Trp bonds also occurs).. Cleaves peptides in various proteins in a process that requires ATP hydrolysis. Has a chymotrypsin-like activity. Plays a major role in the degradation of misfolded proteins. In Thiobacillus denitrificans (strain ATCC 25259 / T1), this protein is ATP-dependent Clp protease proteolytic subunit.